A 361-amino-acid polypeptide reads, in one-letter code: UPF0283 membrane protein Smed_1530 (361 aa).

The interval Met-1 to Asp-40 is disordered. Residues Ala-22 to Pro-31 are compositionally biased toward basic and acidic residues. Helical transmembrane passes span Phe-76 to Val-96 and Trp-109 to Val-129.

The protein belongs to the UPF0283 family.

It localises to the cell inner membrane. In Sinorhizobium medicae (strain WSM419) (Ensifer medicae), this protein is UPF0283 membrane protein Smed_1530.